The primary structure comprises 275 residues: 2,3,4,5-tetrahydropyridine-2,6-dicarboxylate N-succinyltransferase (275 aa).

Positions 104 and 141 each coordinate substrate.

This sequence belongs to the transferase hexapeptide repeat family. Homotrimer.

It localises to the cytoplasm. It catalyses the reaction (S)-2,3,4,5-tetrahydrodipicolinate + succinyl-CoA + H2O = (S)-2-succinylamino-6-oxoheptanedioate + CoA. It functions in the pathway amino-acid biosynthesis; L-lysine biosynthesis via DAP pathway; LL-2,6-diaminopimelate from (S)-tetrahydrodipicolinate (succinylase route): step 1/3. This chain is 2,3,4,5-tetrahydropyridine-2,6-dicarboxylate N-succinyltransferase, found in Aeromonas hydrophila subsp. hydrophila (strain ATCC 7966 / DSM 30187 / BCRC 13018 / CCUG 14551 / JCM 1027 / KCTC 2358 / NCIMB 9240 / NCTC 8049).